Consider the following 228-residue polypeptide: Urease accessory protein UreF (228 aa).

Belongs to the UreF family. As to quaternary structure, ureD, UreF and UreG form a complex that acts as a GTP-hydrolysis-dependent molecular chaperone, activating the urease apoprotein by helping to assemble the nickel containing metallocenter of UreC. The UreE protein probably delivers the nickel.

The protein resides in the cytoplasm. Functionally, required for maturation of urease via the functional incorporation of the urease nickel metallocenter. The polypeptide is Urease accessory protein UreF (Dechloromonas aromatica (strain RCB)).